The sequence spans 410 residues: Cytochrome P450 monooxygenase mpsF (410 aa).

Cys-355 contributes to the heme binding site.

The protein belongs to the cytochrome P450 family. The cofactor is heme.

It participates in secondary metabolite biosynthesis. In terms of biological role, cytochrome P450 monooxygenase; part of the gene cluster that mediates the biosynthesis of macrophasetins, 3-decalinoyltetramic acids (DTAs) which feature a tetramate (pyrrolidine-2,4-dione) unit connected to a decalin fragment and that have potent bioactivities. The PKS-NRPS mpsA together with its associated enoylreductase partner mpsG incorporate one unit of acetyl-CoA, seven units of malonyl-CoA, and one unit of L-alanine to assemble the linear tetramic acid intermediate corresponding to the backbone of macrophasetins. Without the Diels-Alderase mpsD, the mpsA/G product can undergo the non-enzymatic intramolecular Diels-Alder (IMDA) reaction to generate both macrophasetin A and macrophasetin B. Catalyzed by mpsD, the linear tetramic acid intermediate is thoroughly converted to macrophasetin A via the endo-IMDA reaction in a regioselective and stereoselective manner. Finally, the cytochrome P450 monooxygenase mpsF catalyzes the hydroxylation at C20 to yield the end product macrophasetin C. In Macrophomina phaseolina (strain MS6) (Charcoal rot fungus), this protein is Cytochrome P450 monooxygenase mpsF.